The following is a 215-amino-acid chain: MTFDYARRYMPEDQTGKTTVVGNMVAGMCAGVAESVLVLTPGENLKTRLIDDRAGARLYQSSTHAIRTIVTKDGASTFFRGVLPVTLKQSNSSMVRFTSYNQLAPMLQPTCGVSTSVVAGALAGVITVYCTMPFDNVKTQMQSLDGSRIYSSSWDCAKKLVVNGGPRRLWKGTTPRLLRLSVAGAIAFTLYEEVVRLTGFLVLPKVAAKAPKDAA.

2 Solcar repeats span residues 18–106 and 111–197; these read TTVV…LAPM and CGVS…VVRL. 3 consecutive transmembrane segments (helical) span residues 19–39, 112–132, and 182–202; these read TVVGNMVAGMCAGVAESVLVL, GVSTSVVAGALAGVITVYCTM, and VAGAIAFTLYEEVVRLTGFLV.

The protein belongs to the mitochondrial carrier (TC 2.A.29) family.

It localises to the mitochondrion inner membrane. Its pathway is mycotoxin biosynthesis. In terms of biological role, tricarboxylate transporter; part of the gene cluster that mediates the biosynthesis of the host-selective toxins (HSTs) AAL-toxins, sphinganine-analog mycotoxins responsible for Alternaria stem canker on tomato by the tomato pathotype. The biosynthesis starts with the polyketide synthase ALT1-catalyzed C-16 carbon chain assembly from one starter acetyl-CoA unit with malonyl-CoA extender units. ALT1 also selectively transfers methyl groups at the first and the third cycle of chain elongation for AAL toxin. The C-16 polyketide chain is released from the enzyme by a nucleophilic attack of a carbanion, which is derived from R-carbon of glycin by decarboxylation, on the carbonyl carbon of polyketide acyl chain. This step is probably catalyzed by a pyridoxal 5'-phosphate-dependent aminoacyl transferase ALT4. The respective functions of the other enzymes encoded by the cluster have still to be elucidated. The sphingosine N-acyltransferase-like protein ALT7 seems not to act as a resistance/self-tolerance factor against the toxin in the toxin biosynthetic gene cluster, contrary to what is expected. This chain is Tricarboxylate transporter ALT9, found in Alternaria alternata (Alternaria rot fungus).